The sequence spans 688 residues: Glycine--tRNA ligase beta subunit (688 aa).

It belongs to the class-II aminoacyl-tRNA synthetase family. Tetramer of two alpha and two beta subunits.

It is found in the cytoplasm. The enzyme catalyses tRNA(Gly) + glycine + ATP = glycyl-tRNA(Gly) + AMP + diphosphate. This chain is Glycine--tRNA ligase beta subunit, found in Aliivibrio salmonicida (strain LFI1238) (Vibrio salmonicida (strain LFI1238)).